We begin with the raw amino-acid sequence, 1620 residues long: Putative zinc carboxypeptidase (1620 aa).

Topologically, residues 1 to 1367 (MLFKNEDSGN…SYDFLYFDEN (1367 aa)) are extracellular. N-linked (GlcNAc...) asparagine glycosylation is present at asparagine 19. A disordered region spans residues 32–74 (RNDNKNNDNEDNKQDDEEKNDEDDNKSNLLLEENEENKRQGDK). Residues 33–43 (NDNKNNDNEDN) are compositionally biased toward basic and acidic residues. Positions 44-55 (KQDDEEKNDEDD) are enriched in acidic residues. 2 N-linked (GlcNAc...) asparagine glycosylation sites follow: asparagine 56 and asparagine 102. The interval 309–328 (GNHYDAHESTNTYDEEKTRE) is disordered. 10 N-linked (GlcNAc...) asparagine glycosylation sites follow: asparagine 354, asparagine 487, asparagine 508, asparagine 529, asparagine 550, asparagine 571, asparagine 589, asparagine 687, asparagine 802, and asparagine 1010. The tract at residues 497-559 (VNNLDSTVNY…NSTGNNINNI (63 aa)) is possible malaria epitope. The region spanning 1004-1261 (GENKKNNGTK…FYVQNYFEGY (258 aa)) is the Peptidase M14 domain. The Zn(2+) site is built by histidine 1059 and glutamate 1062. Asparagine 1064 and asparagine 1141 each carry an N-linked (GlcNAc...) asparagine glycan. Residue histidine 1155 coordinates Zn(2+). The active-site Proton donor/acceptor is the glutamate 1229. The segment at 1279–1329 (NIKGDDNINGDDNIKGGDNIKGDDNIKRDDNFQRDDNFQRDDNFQRGDNFH) is disordered. The chain crosses the membrane as a helical span at residues 1368–1388 (LLFMTGVSFGICLFKFINFLS). The Cytoplasmic portion of the chain corresponds to 1389 to 1620 (YHKSSICRRT…SKRKKVIVIL (232 aa)). Residues 1560 to 1620 (PNGKYKGPGF…SKRKKVIVIL (61 aa)) form a disordered region. Residues 1581 to 1597 (NKNESKTEKKSKTENKS) are compositionally biased toward basic and acidic residues. The segment covering 1598–1620 (KSKSKNKSKSKNKSKRKKVIVIL) has biased composition (basic residues).

Belongs to the peptidase M14 family. Zn(2+) is required as a cofactor.

It localises to the membrane. This Plasmodium falciparum (isolate 3D7) protein is Putative zinc carboxypeptidase.